The primary structure comprises 37 residues: Chorion class CB protein PCH12 (37 aa).

The interval 1–26 (DGIFPTVGAGDVWYGCGDGAVGIVAE) is central domain. Residues 27–37 (TPFASTTTNPA) form a right arm region.

It belongs to the chorion protein family.

In terms of biological role, this protein is one of many from the eggshell of the silk moth. In Antheraea polyphemus (Polyphemus moth), this protein is Chorion class CB protein PCH12.